Reading from the N-terminus, the 691-residue chain is Probable E3 ubiquitin-protein ligase RHG1A (691 aa).

5 disordered regions span residues 71 to 91, 151 to 235, 316 to 336, 349 to 373, and 395 to 501; these read SLGEASSSGTKDEASSHNEQR, GPGT…PRGM, SFVVSRNPNSTPVSIPPGSRT, VGGTSNSTAPVERNLHLDETRSRSI, and QSSR…MHNR. The segment covering 80 to 91 has biased composition (basic and acidic residues); sequence TKDEASSHNEQR. Composition is skewed to polar residues over residues 204-213 and 317-328; these read GESSSWTPGS and FVVSRNPNSTPV. The segment covering 361–370 has biased composition (basic and acidic residues); that stretch reads RNLHLDETRS. Positions 395-406 are enriched in polar residues; it reads QSSRNVTNGNLN. Low complexity predominate over residues 407–419; the sequence is SASSVSRTGSTTS. Residues 429–440 are compositionally biased toward polar residues; it reads NLAWTSYQNSPH. Low complexity predominate over residues 454 to 465; sequence RSLLSSLAADAT. An RING-type; atypical zinc finger spans residues 637–678; sequence CCVCQEEYTEGEDMGTLECGHEFHSQCIKEWLKQKNLCPICK.

As to expression, expressed in stems, flowers, green siliques, cauline leaves, seeds and roots.

It carries out the reaction S-ubiquitinyl-[E2 ubiquitin-conjugating enzyme]-L-cysteine + [acceptor protein]-L-lysine = [E2 ubiquitin-conjugating enzyme]-L-cysteine + N(6)-ubiquitinyl-[acceptor protein]-L-lysine.. Its pathway is protein modification; protein ubiquitination. Its function is as follows. Probable E3 ubiquitin-protein ligase that may possess E3 ubiquitin ligase activity in vitro. This chain is Probable E3 ubiquitin-protein ligase RHG1A, found in Arabidopsis thaliana (Mouse-ear cress).